Consider the following 201-residue polypeptide: Adenylyl-sulfate kinase (201 aa).

35–42 (GLSGSGKS) contacts ATP. Ser109 functions as the Phosphoserine intermediate in the catalytic mechanism.

Belongs to the APS kinase family.

It carries out the reaction adenosine 5'-phosphosulfate + ATP = 3'-phosphoadenylyl sulfate + ADP + H(+). The protein operates within sulfur metabolism; hydrogen sulfide biosynthesis; sulfite from sulfate: step 2/3. Functionally, catalyzes the synthesis of activated sulfate. This chain is Adenylyl-sulfate kinase, found in Escherichia coli (strain ATCC 8739 / DSM 1576 / NBRC 3972 / NCIMB 8545 / WDCM 00012 / Crooks).